Here is a 261-residue protein sequence, read N- to C-terminus: Calcium-binding protein 8 (261 aa).

The interval Met1–Thr39 is disordered. The Cytoplasmic portion of the chain corresponds to Met1–Ser234. A compositionally biased stretch (basic and acidic residues) spans Gly8 to Asp19. EF-hand domains lie at Glu78–Met113 and Pro114–Ser149. Residues Asp91, Asp93, Asn95, Glu102, Asp127, Asp129, Asp131, Gln133, and Glu138 each coordinate Ca(2+). The helical; Anchor for type IV membrane protein transmembrane segment at Leu235–Ile255 threads the bilayer. Over Leu256–Glu261 the chain is Extracellular.

As to quaternary structure, interacts with PI4KB. This binding competes with FREQ/NCS1 binding in a calcium-dependent manner. As to expression, brain specific.

It localises to the golgi apparatus. Its subcellular location is the trans-Golgi network membrane. It is found in the cytoplasm. The protein resides in the perinuclear region. The protein localises to the cell membrane. Negatively regulates Golgi-to-plasma membrane trafficking by interacting with PI4KB and inhibiting its activity. May play a role in the physiology of neurons and is potentially important in memory and learning. The sequence is that of Calcium-binding protein 8 (CALN1) from Homo sapiens (Human).